Here is a 161-residue protein sequence, read N- to C-terminus: Allophycocyanin beta chain (161 aa).

The residue at position 71 (Asn71) is an N4-methylasparagine. A (2R,3E)-phycocyanobilin-binding site is contributed by Cys81.

The protein belongs to the phycobiliprotein family. Heterodimer of an alpha and a beta chain. Contains one covalently linked phycocyanobilin chromophore.

The protein resides in the cellular thylakoid membrane. Functionally, light-harvesting photosynthetic bile pigment-protein from the phycobiliprotein complex. Allophycocyanin has a maximum absorption at approximately 650 nanometers. This is Allophycocyanin beta chain (apcB) from Arthrospira platensis (Spirulina platensis).